The sequence spans 282 residues: Elongation factor Ts (282 aa).

An involved in Mg(2+) ion dislocation from EF-Tu region spans residues 80-83 (TDFV).

The protein belongs to the EF-Ts family.

It localises to the cytoplasm. Associates with the EF-Tu.GDP complex and induces the exchange of GDP to GTP. It remains bound to the aminoacyl-tRNA.EF-Tu.GTP complex up to the GTP hydrolysis stage on the ribosome. The protein is Elongation factor Ts of Chlamydia felis (strain Fe/C-56) (Chlamydophila felis).